Here is a 509-residue protein sequence, read N- to C-terminus: ATP synthase subunit alpha (509 aa).

Position 171 to 178 (171 to 178 (GDRKTGKT)) interacts with ATP.

The protein belongs to the ATPase alpha/beta chains family. As to quaternary structure, F-type ATPases have 2 components, CF(1) - the catalytic core - and CF(0) - the membrane proton channel. CF(1) has five subunits: alpha(3), beta(3), gamma(1), delta(1), epsilon(1). CF(0) has three main subunits: a(1), b(2) and c(9-12). The alpha and beta chains form an alternating ring which encloses part of the gamma chain. CF(1) is attached to CF(0) by a central stalk formed by the gamma and epsilon chains, while a peripheral stalk is formed by the delta and b chains.

The protein resides in the cell inner membrane. It catalyses the reaction ATP + H2O + 4 H(+)(in) = ADP + phosphate + 5 H(+)(out). Produces ATP from ADP in the presence of a proton gradient across the membrane. The alpha chain is a regulatory subunit. This Ehrlichia canis (strain Jake) protein is ATP synthase subunit alpha.